A 142-amino-acid polypeptide reads, in one-letter code: Large ribosomal subunit protein uL16 (142 aa).

The protein belongs to the universal ribosomal protein uL16 family. Part of the 50S ribosomal subunit.

In terms of biological role, binds 23S rRNA and is also seen to make contacts with the A and possibly P site tRNAs. This is Large ribosomal subunit protein uL16 from Phenylobacterium zucineum (strain HLK1).